A 451-amino-acid polypeptide reads, in one-letter code: Chromosomal replication initiator protein DnaA (451 aa).

Positions 1–93 (MENIDDLWNK…HNQEEEALPE (93 aa)) are domain I, interacts with DnaA modulators. A disordered region spans residues 88–108 (EEALPEQTPQTPPEKDVAGQS). Residues 94–113 (QTPQTPPEKDVAGQSTLSQT) form a domain II region. The segment at 114–330 (MLNDKYTFNT…GALIRVVAYS (217 aa)) is domain III, AAA+ region. Positions 158, 160, 161, and 162 each coordinate ATP. The segment at 331–451 (SLINQDMNAD…VQAITEQLRQ (121 aa)) is domain IV, binds dsDNA.

Belongs to the DnaA family. In terms of assembly, oligomerizes as a right-handed, spiral filament on DNA at oriC.

Its subcellular location is the cytoplasm. In terms of biological role, plays an essential role in the initiation and regulation of chromosomal replication. ATP-DnaA binds to the origin of replication (oriC) to initiate formation of the DNA replication initiation complex once per cell cycle. Binds the DnaA box (a 9 base pair repeat at the origin) and separates the double-stranded (ds)DNA. Forms a right-handed helical filament on oriC DNA; dsDNA binds to the exterior of the filament while single-stranded (ss)DNA is stabiized in the filament's interior. The ATP-DnaA-oriC complex binds and stabilizes one strand of the AT-rich DNA unwinding element (DUE), permitting loading of DNA polymerase. After initiation quickly degrades to an ADP-DnaA complex that is not apt for DNA replication. Binds acidic phospholipids. This chain is Chromosomal replication initiator protein DnaA, found in Shouchella clausii (strain KSM-K16) (Alkalihalobacillus clausii).